The primary structure comprises 258 residues: Protein IMPACT homolog (258 aa).

One can recognise an RWD domain in the interval 10–114; the sequence is EELEAVEAIY…TELDGVLYVE (105 aa). Residue Lys187 forms a Glycyl lysine isopeptide (Lys-Gly) (interchain with G-Cter in ubiquitin) linkage.

Belongs to the IMPACT family. As to quaternary structure, interacts (via N-terminus) with GCN1 (via C-terminus); this interaction reduces the GCN1-GCN20 complex formation and prevents the interaction of GCN1 with GCN2 protein kinase and GCN2 activation in amino acid-starved cells. Interacts (via C-terminus) with ACT1; this interaction occurs in a GCN1-independent manner. Interacts with RPL39; this interaction occurs in a GCN1-independent manner. Associates (via middle region) with ribosomes; this association occurs in a GCN1-independent manner and persists under amino acid starvation conditions.

It localises to the cytoplasm. It is found in the nucleus. Translational regulator that ensures constant high levels of translation under amino acid starvation. Plays a role as a negative regulator of the GCN2 kinase activity; impairs GCN1-mediated GCN2 activation, and hence GCN2-mediated eIF-2-alpha phosphorylation in amino acid-starved cells and subsequent down-regulation of protein synthesis. In normal conditions, it resides in a actin complex and has no activity. The polypeptide is Protein IMPACT homolog (YIH1) (Saccharomyces cerevisiae (strain ATCC 204508 / S288c) (Baker's yeast)).